The primary structure comprises 325 residues: Phenylalanine--tRNA ligase alpha subunit (325 aa).

E251 serves as a coordination point for Mg(2+).

Belongs to the class-II aminoacyl-tRNA synthetase family. Phe-tRNA synthetase alpha subunit type 1 subfamily. As to quaternary structure, tetramer of two alpha and two beta subunits. Mg(2+) is required as a cofactor.

It localises to the cytoplasm. It carries out the reaction tRNA(Phe) + L-phenylalanine + ATP = L-phenylalanyl-tRNA(Phe) + AMP + diphosphate + H(+). This chain is Phenylalanine--tRNA ligase alpha subunit, found in Thermotoga neapolitana (strain ATCC 49049 / DSM 4359 / NBRC 107923 / NS-E).